The primary structure comprises 89 residues: Small ribosomal subunit protein bS20 (89 aa).

It belongs to the bacterial ribosomal protein bS20 family.

Binds directly to 16S ribosomal RNA. The polypeptide is Small ribosomal subunit protein bS20 (Hahella chejuensis (strain KCTC 2396)).